The primary structure comprises 400 residues: MITRGEFFMIKEMYERGMSISDIARELGIDRKTVRKYIHSPNPPSKSKRKQRKSKLDPFKPYLQKRMLEDGVFNSEKLFFEIRQQGYTGGKTILKDYMKPFRETAKKKYTVRYETLPGEQMQVDWKEVGEVVIEGKKVKLSLFVATLGYSRMKYAVFTTSQDQEHLMECLIQSFKYFGGVPKKVLFDNMKTVTDGREQGVVKWNQRFSEFASYYGFIPKVCRPYRAQTKGKVERAIQYIMDHFYVGTAFESIEELNFLLHRWLDQVANRKPNATTGISPQERWAEESLKPLPLKDYDTSYLSYRKVHWDGSFSYKGEQWLLSAEYAGKEILVKERLNGDIRLYFRGEEISHVDQQKKVISFAEKIKKKQTEMAATISPVSVEVDTRPLSVYDAFLRGESS.

Residues 5-67 (GEFFMIKEMY…PFKPYLQKRM (63 aa)) form the HTH IS21-type domain. The segment at residues 20-39 (ISDIARELGIDRKTVRKYIH) is a DNA-binding region (H-T-H motif). The segment at 35 to 55 (RKYIHSPNPPSKSKRKQRKSK) is disordered. The Integrase catalytic domain maps to 113–287 (YETLPGEQMQ…SPQERWAEES (175 aa)).

It belongs to the transposase IS21/IS408/IS1162 family.

In terms of biological role, involved in the transposition of the insertion sequence. The polypeptide is Putative transposase for insertion sequence element IS5376 (Geobacillus stearothermophilus (Bacillus stearothermophilus)).